We begin with the raw amino-acid sequence, 716 residues long: 1,4-alpha-glucan branching enzyme GlgB (716 aa).

Aspartate 399 serves as the catalytic Nucleophile. Glutamate 452 serves as the catalytic Proton donor.

Belongs to the glycosyl hydrolase 13 family. GlgB subfamily. As to quaternary structure, monomer.

The catalysed reaction is Transfers a segment of a (1-&gt;4)-alpha-D-glucan chain to a primary hydroxy group in a similar glucan chain.. It participates in glycan biosynthesis; glycogen biosynthesis. Functionally, catalyzes the formation of the alpha-1,6-glucosidic linkages in glycogen by scission of a 1,4-alpha-linked oligosaccharide from growing alpha-1,4-glucan chains and the subsequent attachment of the oligosaccharide to the alpha-1,6 position. The chain is 1,4-alpha-glucan branching enzyme GlgB from Rhodopseudomonas palustris (strain HaA2).